The following is a 743-amino-acid chain: Dynein regulatory complex protein 1 homolog (743 aa).

Acidic residues-rich tracts occupy residues 1–10 (MDDNEDELEE) and 19–28 (SVEEEEEVEP). Residues 1-34 (MDDNEDELEEHQELVSDGSVEEEEEVEPDLGPVD) form a disordered region. 2 coiled-coil regions span residues 175–332 (DQIE…VLMN) and 395–416 (KLHS…NNRE). The tract at residues 599–620 (NRLQGAAGGQPDEKEHRSTGDT) is disordered. A coiled-coil region spans residues 715-742 (KMRVQYDAEVVFLRRQNEELRHLLQKFT).

Belongs to the DRC1 family.

The protein is Dynein regulatory complex protein 1 homolog of Drosophila melanogaster (Fruit fly).